A 202-amino-acid polypeptide reads, in one-letter code: Ribonuclease HII (202 aa).

The 189-residue stretch at 14-202 folds into the RNase H type-2 domain; that stretch reads LPLAGVDEAG…VAQFSLFPAA (189 aa). Asp20, Glu21, and Asp111 together coordinate a divalent metal cation.

The protein belongs to the RNase HII family. The cofactor is Mn(2+). Mg(2+) serves as cofactor.

The protein resides in the cytoplasm. The catalysed reaction is Endonucleolytic cleavage to 5'-phosphomonoester.. Its function is as follows. Endonuclease that specifically degrades the RNA of RNA-DNA hybrids. The protein is Ribonuclease HII of Rhizorhabdus wittichii (strain DSM 6014 / CCUG 31198 / JCM 15750 / NBRC 105917 / EY 4224 / RW1) (Sphingomonas wittichii).